Reading from the N-terminus, the 386-residue chain is Chaperone protein DnaJ (386 aa).

One can recognise a J domain in the interval 5–70 (DYYEVLGVER…QKRAAYDRYG (66 aa)). The CR-type zinc finger occupies 138 to 216 (GKDETIHVPQ…CGGHGQVKEE (79 aa)). 8 residues coordinate Zn(2+): C151, C154, C168, C171, C190, C193, C204, and C207. 4 CXXCXGXG motif repeats span residues 151–158 (CRPCEGTG), 168–175 (CETCGGHG), 190–197 (CHICQGRG), and 204–211 (CKTCGGHG).

The protein belongs to the DnaJ family. Homodimer. Zn(2+) is required as a cofactor.

The protein resides in the cytoplasm. Participates actively in the response to hyperosmotic and heat shock by preventing the aggregation of stress-denatured proteins and by disaggregating proteins, also in an autonomous, DnaK-independent fashion. Unfolded proteins bind initially to DnaJ; upon interaction with the DnaJ-bound protein, DnaK hydrolyzes its bound ATP, resulting in the formation of a stable complex. GrpE releases ADP from DnaK; ATP binding to DnaK triggers the release of the substrate protein, thus completing the reaction cycle. Several rounds of ATP-dependent interactions between DnaJ, DnaK and GrpE are required for fully efficient folding. Also involved, together with DnaK and GrpE, in the DNA replication of plasmids through activation of initiation proteins. The polypeptide is Chaperone protein DnaJ (Hyphomonas neptunium (strain ATCC 15444)).